The primary structure comprises 428 residues: Cysteine synthase 2 (428 aa).

The chain crosses the membrane as a helical span at residues 7 to 27; it reads IYIGSAFVAGVVLTIAFKDLF. Lys106 is subject to N6-(pyridoxal phosphate)lysine. Residues 260–264 and Ser367 contribute to the pyridoxal 5'-phosphate site; that span reads GTGGT.

The protein belongs to the cysteine synthase/cystathionine beta-synthase family. Requires pyridoxal 5'-phosphate as cofactor.

It is found in the mitochondrion outer membrane. It catalyses the reaction O-acetyl-L-serine + hydrogen sulfide = L-cysteine + acetate. Putative cysteine synthase that catalyzes the conversion of O-acetyl-L-serine (OAS) into cysteine, the last step in the cysteine biosynthesis pathway. However, in contrast to cysteine synthase cysB, this CS-like protein seems not to function in cysteine biosynthesis. The sequence is that of Cysteine synthase 2 from Emericella nidulans (strain FGSC A4 / ATCC 38163 / CBS 112.46 / NRRL 194 / M139) (Aspergillus nidulans).